A 602-amino-acid chain; its full sequence is Leucine-rich repeat-containing protein 40 (602 aa).

The disordered stretch occupies residues 1 to 26 (MSRHMRAPRFDPRAGFHAEGKDRGPS). Residues 8–24 (PRFDPRAGFHAEGKDRG) show a composition bias toward basic and acidic residues. The LRR 1 repeat unit spans residues 35 to 58 (ARSSGQLNLAGRNLGEVPQCVWRI). At S71 the chain carries Phosphoserine. LRR repeat units lie at residues 81–103 (QTDL…DLRL), 104–126 (LPAL…AIRE), 127–149 (LDNL…EITS), 150–172 (LKNL…GFEH), 174–195 (SCLE…DFAL), 196–219 (LSSL…ISRM), 221–241 (RLKH…DVGS), 242–266 (MESL…SCRQ), 268–287 (KELH…HLQH), 288–310 (LQAI…EMAL), 311–334 (LQSL…LGNL), 336–356 (LKFL…IIAK), 398–421 (IATL…LFDA), 424–447 (TTLI…IVEL), 449–470 (EMVL…ELCL), 471–494 (LQKL…MSSL), 496–517 (KLQT…LYRI), 519–540 (TLEA…KMKL), 541–564 (MENL…LGNC), and 566–587 (QLRT…ILMK).

In Mus musculus (Mouse), this protein is Leucine-rich repeat-containing protein 40 (Lrrc40).